The chain runs to 200 residues: Transcription elongation factor A protein-like 5 (200 aa).

Composition is skewed to basic and acidic residues over residues 1 to 49 (MEKF…KLEV), 61 to 85 (GEGK…KPDS), 94 to 106 (RAAE…DYVP), 114 to 153 (DRGT…EELR), and 190 to 200 (GQKDLEDAPFV). The segment at 1-200 (MEKFYKENEG…QKDLEDAPFV (200 aa)) is disordered.

Belongs to the TFS-II family. TFA subfamily.

Its subcellular location is the nucleus. In terms of biological role, may be involved in transcriptional regulation. This Mus musculus (Mouse) protein is Transcription elongation factor A protein-like 5 (Tceal5).